A 522-amino-acid polypeptide reads, in one-letter code: Putative thymidine phosphorylase (522 aa).

This sequence belongs to the thymidine/pyrimidine-nucleoside phosphorylase family. Type 2 subfamily.

It carries out the reaction thymidine + phosphate = 2-deoxy-alpha-D-ribose 1-phosphate + thymine. The chain is Putative thymidine phosphorylase from Albidiferax ferrireducens (strain ATCC BAA-621 / DSM 15236 / T118) (Rhodoferax ferrireducens).